Here is a 108-residue protein sequence, read N- to C-terminus: uncharacterized protein (108 aa).

This is an uncharacterized protein from Saccharomyces cerevisiae (strain ATCC 204508 / S288c) (Baker's yeast).